The sequence spans 504 residues: UDP-N-acetylmuramoylalanine--D-glutamate ligase (504 aa).

An ATP-binding site is contributed by 132-138 (GTNGKTT). A compositionally biased stretch (basic and acidic residues) spans 286-295 (DRDASDEPAP). The interval 286-305 (DRDASDEPAPKRRRKNEVAT) is disordered.

It belongs to the MurCDEF family.

The protein localises to the cytoplasm. The enzyme catalyses UDP-N-acetyl-alpha-D-muramoyl-L-alanine + D-glutamate + ATP = UDP-N-acetyl-alpha-D-muramoyl-L-alanyl-D-glutamate + ADP + phosphate + H(+). It participates in cell wall biogenesis; peptidoglycan biosynthesis. Cell wall formation. Catalyzes the addition of glutamate to the nucleotide precursor UDP-N-acetylmuramoyl-L-alanine (UMA). The sequence is that of UDP-N-acetylmuramoylalanine--D-glutamate ligase from Paraburkholderia xenovorans (strain LB400).